The following is a 269-amino-acid chain: Ribosomal RNA small subunit methyltransferase A (269 aa).

Asn18, Leu20, Gly45, Glu66, Asp91, and Asn112 together coordinate S-adenosyl-L-methionine.

The protein belongs to the class I-like SAM-binding methyltransferase superfamily. rRNA adenine N(6)-methyltransferase family. RsmA subfamily.

It is found in the cytoplasm. The catalysed reaction is adenosine(1518)/adenosine(1519) in 16S rRNA + 4 S-adenosyl-L-methionine = N(6)-dimethyladenosine(1518)/N(6)-dimethyladenosine(1519) in 16S rRNA + 4 S-adenosyl-L-homocysteine + 4 H(+). Functionally, specifically dimethylates two adjacent adenosines (A1518 and A1519) in the loop of a conserved hairpin near the 3'-end of 16S rRNA in the 30S particle. May play a critical role in biogenesis of 30S subunits. This is Ribosomal RNA small subunit methyltransferase A from Vibrio parahaemolyticus serotype O3:K6 (strain RIMD 2210633).